The chain runs to 78 residues: Translation initiation factor IF-1, chloroplastic (78 aa).

The region spanning 1 to 72 (MKKQNLIDME…TKGRITYRLR (72 aa)) is the S1-like domain.

Belongs to the IF-1 family. Component of the 30S ribosomal translation pre-initiation complex which assembles on the 30S ribosome in the order IF-2 and IF-3, IF-1 and N-formylmethionyl-tRNA(fMet); mRNA recruitment can occur at any time during PIC assembly.

It localises to the plastid. The protein resides in the chloroplast. Its function is as follows. One of the essential components for the initiation of protein synthesis. Stabilizes the binding of IF-2 and IF-3 on the 30S subunit to which N-formylmethionyl-tRNA(fMet) subsequently binds. Helps modulate mRNA selection, yielding the 30S pre-initiation complex (PIC). Upon addition of the 50S ribosomal subunit IF-1, IF-2 and IF-3 are released leaving the mature 70S translation initiation complex. The protein is Translation initiation factor IF-1, chloroplastic of Physcomitrium patens (Spreading-leaved earth moss).